The following is a 759-amino-acid chain: MRTSPRRPLILKRRRLPLPIQNAPSETSEEEAKRSPGQQEPTQAQASQDVAESSSCKFPAGIKIINHPTVPNTQVVAIPNNADIQSIITALTAKGKESGSSGPNKFILISSGGASSHPPDPQSQAQTSTDSKRTELITETLGPKPGAKGVPVPKPPGALPRQRQESCGGEAAGCTLDNSLTNIQWLGKMSSDGLGRCSIKQELEEKENCHLEQNRVKVEAPSRASVSWQDSVSERPPYSYMAMIQFAINSTERKRMTLKDIYTWIEDHFPYFKHIAKPGWKNSIRHNLSLHDMFVRETSANGKVSFWTIHPSANRYLTLDQVFKPLEPGSPQSPEHLESQQKRPNPELRRNVTIKTELPLGARRKMKPLLPRVSSYLVPIQFPVNQSLVLQPSVKVPLPLAASLMSSELARHSKRVRIAPKVLLSNEGIAPLPATEPMKEEKPLLGEGLLPLLPIQSIKEEVIQPGEDIPHLERPIKVESPPLEEWPSPCASVKEELSNSWEDSSCSPTPKPKKSYCGLKSPTRCVSEMLVTKRREKREVSRSRRKQHLQPPCLDEPELFFSEDSSTFRPAMEILAESSEPAPQLSCPQEEGGPFKTPIKETLPVSSTPSKSVLSRDPESWRLTPPAKVGGLDFSPVRTPQGAFGPLPDSLGLMELNTTPLKSVPLFDSPRELLNSEAFDLASDPFSSSPPPHLEAKPGSPELQVPSLSANRSLTEGLVLDTMNDSLSKILLDISFPGLEEDPLGPDNINWSQFIPELR.

2 disordered regions span residues 1-54 (MRTS…AESS) and 94-165 (KGKE…QRQE). Polar residues predominate over residues 36-54 (PGQQEPTQAQASQDVAESS). Positions 141–151 (LGPKPGAKGVP) are enriched in low complexity. Residues K200 and K324 each participate in a glycyl lysine isopeptide (Lys-Gly) (interchain with G-Cter in SUMO2) cross-link. Positions 234–326 (ERPPYSYMAM…LTLDQVFKPL (93 aa)) form a DNA-binding region, fork-head. Residues 328-349 (PGSPQSPEHLESQQKRPNPELR) are disordered. Position 330 is a phosphoserine (S330). Over residues 335-349 (EHLESQQKRPNPELR) the composition is skewed to basic and acidic residues. K355 participates in a covalent cross-link: Glycyl lysine isopeptide (Lys-Gly) (interchain with G-Cter in SUMO2). S375 is modified (phosphoserine; by CHEK2). Residues K421 and K439 each participate in a glycyl lysine isopeptide (Lys-Gly) (interchain with G-Cter in SUMO2) cross-link. S521 is modified (phosphoserine). Disordered regions lie at residues 530 to 556 (LVTK…CLDE), 572 to 643 (MEIL…PQGA), and 681 to 706 (LASD…LQVP). A compositionally biased stretch (basic and acidic residues) spans 531 to 542 (VTKRREKREVSR). Over residues 604–613 (PVSSTPSKSV) the composition is skewed to polar residues. The residue at position 608 (T608) is a Phosphothreonine; by CDK1. At T624 the chain carries Phosphothreonine. 2 positions are modified to phosphoserine; by PLK1: S726 and S735.

Phosphorylated in M (mitotic) phase. Phosphorylation by the checkpoint kinase CHEK2 in response to DNA damage increases the FOXM1 protein stability probably stimulating the transcription of genes involved in DNA repair. Phosphorylated by CDK1 in late S and G2 phases, creating docking sites for the POLO box domains of PLK1. Subsequently, PLK1 binds and phosphorylates FOXM1, leading to activation of transcriptional activity and subsequent enhanced expression of key mitotic regulators. Phosphorylated by GSK3B leading to ubiquitination and proteasomal degradation. In terms of tissue distribution, highly expressed in thymus and testis, but weakly in intestine and lung. Appears to be expressed only in adult organs containing proliferating/cycling cells or in response to growth factors.

It is found in the nucleus. Its function is as follows. Transcription factor regulating the expression of cell cycle genes essential for DNA replication and mitosis. Plays a role in the control of cell proliferation. Also plays a role in DNA break repair, participating in the DNA damage checkpoint response. Promotes transcription of PHB2. The protein is Forkhead box protein M1 (Foxm1) of Rattus norvegicus (Rat).